A 99-amino-acid polypeptide reads, in one-letter code: Protein dpy-30 homolog (99 aa).

The residue at position 1 (methionine 1) is an N-acetylmethionine. A disordered region spans residues 1 to 26; sequence MEPEQMLEGQTQVAENPHSEYGLTDN. Serine 19 carries the phosphoserine modification. An N6-acetyllysine; alternate modification is found at lysine 35. Residue lysine 35 forms a Glycyl lysine isopeptide (Lys-Gly) (interchain with G-Cter in SUMO2); alternate linkage.

This sequence belongs to the dpy-30 family. Homodimer. Core component of several methyltransferase-containing complexes including MLL1/MLL, MLL2/3 (also named ASCOM complex) and MLL4/WBP7. Each complex is at least composed of ASH2L, RBBP5, WDR5, DPY30, one or more specific histone methyltransferases (KMT2A/MLL1, KMT2D/MLL2, KMT2C/MLL3 and KMT2B/MLL4), and the facultative components MEN1, HCFC1, HCFC2, NCOA6, KDM6A, PAXIP1/PTIP, PAGR1 and alpha- and beta-tubulin. Interacts with ASH2L; the interaction is direct. Interacts with ARFGEF1. Component of the SET1 complex, at least composed of the catalytic subunit (SETD1A or SETD1B), WDR5, WDR82, RBBP5, ASH2L/ASH2, CXXC1/CFP1, HCFC1 and DPY30.

Its subcellular location is the nucleus. The protein localises to the golgi apparatus. It is found in the trans-Golgi network. Its function is as follows. As part of the MLL1/MLL complex, involved in the methylation of histone H3 at 'Lys-4', particularly trimethylation. Histone H3 'Lys-4' methylation represents a specific tag for epigenetic transcriptional activation. May play some role in histone H3 acetylation. In embryonic stem cells, may play a crucial role in retinoic acid-induced differentiation along the neural lineage, regulating gene induction and H3 'Lys-4' methylation at key developmental loci. May also play an indirect or direct role in endosomal transport. This Bos taurus (Bovine) protein is Protein dpy-30 homolog (DPY30).